The following is a 201-amino-acid chain: Natural cytotoxicity triggering receptor 3 (201 aa).

The first 18 residues, 1–18, serve as a signal peptide directing secretion; the sequence is MAWMLLLILIMVHPGSCA. The Ig-like domain occupies 19 to 126; that stretch reads LWVSQPPEIR…VGTGNGTRLV (108 aa). Residues 19-135 are Extracellular-facing; the sequence is LWVSQPPEIR…VVEKEHPQLG (117 aa). Cysteines 39 and 108 form a disulfide. N-linked (GlcNAc...) asparagine glycans are attached at residues Asn42 and Asn121. The chain crosses the membrane as a helical span at residues 136–156; that stretch reads AGTVLLLRAGFYAVSFLSVAV. The Cytoplasmic segment spans residues 157 to 201; sequence GSTVYYQGKCLTWKGPRRQLPAVVPAPLPPPCGSSAQLLPPVPGG.

Belongs to the natural cytotoxicity receptor (NCR) family. Homodimer in the unliganted form. Interacts with CD3Z. Interacts with and is activated by binding to NCR3LG1. Interacts with and is activated by binding to BAG6. Interacts with and is inhibited by binding to LGALS3.

Its subcellular location is the cell membrane. Functionally, cell membrane receptor of natural killer/NK cells that is activated by binding of extracellular ligands including BAG6 and NCR3LG1. Stimulates NK cells cytotoxicity toward neighboring cells producing these ligands. It controls, for instance, NK cells cytotoxicity against tumor cells. Engagement of NCR3 by BAG6 also promotes myeloid dendritic cells (DC) maturation, both through killing DCs that did not acquire a mature phenotype, and inducing the release by NK cells of TNFA and IFNG that promote DC maturation. The protein is Natural cytotoxicity triggering receptor 3 (NCR3) of Pan troglodytes (Chimpanzee).